The chain runs to 89 residues: Small ribosomal subunit protein bS16c (89 aa).

The protein belongs to the bacterial ribosomal protein bS16 family.

It is found in the plastid. Its subcellular location is the chloroplast. In Morus indica (Mulberry), this protein is Small ribosomal subunit protein bS16c.